The following is a 375-amino-acid chain: N-acetylneuraminate epimerase (375 aa).

The signal sequence occupies residues 1–22 (MKLTKTALCTALFATFTFSANA). Kelch repeat units lie at residues 43-87 (TVYV…AAVD), 89-140 (KLYV…ASHG), 142-176 (KVYI…EIVA), 177-222 (AYFD…TIQG), 225-273 (LVVV…LAGA), 295-344 (KQFK…SYNN), and 346-375 (VLLI…LTVE). E231 (proton acceptor) is an active-site residue.

Belongs to the NanM family. Homodimer.

Its subcellular location is the periplasm. The catalysed reaction is N-acetyl-alpha-neuraminate = N-acetyl-beta-neuraminate. Functionally, converts alpha-N-acetylneuranimic acid (Neu5Ac) to the beta-anomer, accelerating the equilibrium between the alpha- and beta-anomers. Probably facilitates sialidase-negative bacteria to compete successfully for limited amounts of extracellular Neu5Ac, which is likely taken up in the beta-anomer. In addition, the rapid removal of sialic acid from solution might be advantageous to the bacterium to damp down host responses. The sequence is that of N-acetylneuraminate epimerase from Haemophilus influenzae (strain 86-028NP).